A 181-amino-acid chain; its full sequence is Ribonuclease M5 (181 aa).

Positions 5–88 constitute a Toprim domain; it reads KEIIVVEGKD…IKHAYLNTKD (84 aa). Residues Glu11, Asp57, and Asp59 each coordinate Mg(2+).

The protein belongs to the ribonuclease M5 family. Requires Mg(2+) as cofactor.

The protein resides in the cytoplasm. The catalysed reaction is Endonucleolytic cleavage of RNA, removing 21 and 42 nucleotides, respectively, from the 5'- and 3'-termini of a 5S-rRNA precursor.. Functionally, required for correct processing of both the 5' and 3' ends of 5S rRNA precursor. Cleaves both sides of a double-stranded region yielding mature 5S rRNA in one step. The sequence is that of Ribonuclease M5 from Borreliella burgdorferi (strain ATCC 35210 / DSM 4680 / CIP 102532 / B31) (Borrelia burgdorferi).